We begin with the raw amino-acid sequence, 208 residues long: Small ribosomal subunit protein uS4 (208 aa).

The S4 RNA-binding domain maps to 99-165 (RRLDNVVFQL…PRLKEILSSL (67 aa)).

The protein belongs to the universal ribosomal protein uS4 family. Part of the 30S ribosomal subunit. Contacts protein S5. The interaction surface between S4 and S5 is involved in control of translational fidelity.

One of the primary rRNA binding proteins, it binds directly to 16S rRNA where it nucleates assembly of the body of the 30S subunit. Functionally, with S5 and S12 plays an important role in translational accuracy. The protein is Small ribosomal subunit protein uS4 of Desulfitobacterium hafniense (strain DSM 10664 / DCB-2).